We begin with the raw amino-acid sequence, 282 residues long: Elongation factor Ts (282 aa).

The segment at 79–82 is involved in Mg(2+) ion dislocation from EF-Tu; it reads TDFV.

It belongs to the EF-Ts family.

It is found in the cytoplasm. Associates with the EF-Tu.GDP complex and induces the exchange of GDP to GTP. It remains bound to the aminoacyl-tRNA.EF-Tu.GTP complex up to the GTP hydrolysis stage on the ribosome. This is Elongation factor Ts from Shewanella piezotolerans (strain WP3 / JCM 13877).